Consider the following 292-residue polypeptide: Cyclin-dependent kinase 5 (292 aa).

Residues 4 to 286 enclose the Protein kinase domain; sequence YEKLEKIGEG…AEEALQHPYF (283 aa). Residues 10–18 and lysine 33 each bind ATP; that span reads IGEGTYGTV. Tyrosine 15 carries the phosphotyrosine; by ABL1, EPHA4 and FYN modification. Threonine 17 is subject to Phosphothreonine. Lysine 56 carries the N6-acetyllysine modification. Serine 72 is subject to Phosphoserine. The active-site Proton acceptor is the aspartate 126. Serine 159 carries the post-translational modification Phosphoserine.

This sequence belongs to the protein kinase superfamily. CMGC Ser/Thr protein kinase family. CDC2/CDKX subfamily. Heterodimer composed of a catalytic subunit CDK5 and a regulatory subunit CDK5R1 (p25) and macromolecular complex composed of at least CDK5, CDK5R1 (p35) and CDK5RAP1 or CDK5RAP2 or CDK5RAP3. Only the heterodimer shows kinase activity. Under neurotoxic stress and neuronal injury conditions, p35 is cleaved by calpain to generate p25 that hyperactivates CDK5, that becomes functionally disabled and often toxic. Found in a trimolecular complex with CABLES1 and ABL1. Interacts with CABLES1 and CABLES2. Interacts with AATK and GSTP1. Binds to HDAC1 when in complex with p25. Interaction with myristoylation p35 promotes CDK5 association with membranes. Both isoforms 1 and 2 interacts with beta-catenin/CTNNB1. Interacts with delta-catenin/CTNND2 and APEX1. Interacts with P53/TP53 in neurons. Interacts with EPHA4; may mediate the activation of NGEF by EPHA4. Interacts with PTK2/FAK1. The complex p35/CDK5 interacts with CLOCK. Interacts with HTR6. Phosphorylation on Tyr-15 by ABL1 and FYN, and on Ser-159 by casein kinase 1 promotes kinase activity. By contrast, phosphorylation at Thr-14 inhibits activity. Post-translationally, phosphorylation at Ser-159 is essential for maximal catalytic activity. Ubiquitously expressed. Accumulates in cortical neurons (at protein level). As to expression, expressed in the testis, skeletal muscle, colon, bone marrow and ovary.

Its subcellular location is the cytoplasm. It is found in the nucleus. It localises to the cell membrane. The protein localises to the perikaryon. The protein resides in the cell projection. Its subcellular location is the lamellipodium. It is found in the growth cone. It localises to the postsynaptic density. The protein localises to the synapse. The catalysed reaction is L-seryl-[protein] + ATP = O-phospho-L-seryl-[protein] + ADP + H(+). It catalyses the reaction L-threonyl-[protein] + ATP = O-phospho-L-threonyl-[protein] + ADP + H(+). With respect to regulation, inhibited by 2-(1-ethyl-2-hydroxyethylamino)-6-benzylamino-9-isopropylpurine (roscovitine), 1-isopropyl-4-aminobenzyl-6-ether-linked benzimidazoles, resveratrol, AT-7519 and olomoucine. Activated by CDK5R1 (p35) and CDK5R2 (p39) during the development of the nervous system; degradation of CDK5R1 (p35) and CDK5R2 (p39) by proteasome result in down regulation of kinase activity, during this process, CDK5 phosphorylates p35 and induces its ubiquitination and subsequent degradation. Kinase activity is mainly determined by the amount of p35 available and subcellular location; reversible association to plasma membrane inhibits activity. Long-term inactivation as well as CDK5R1 (p25)-mediated hyperactivation of CDK5 triggers cell death. The pro-death activity of hyperactivated CDK5 is suppressed by membrane association of CDK5, via myristoylation of p35. Brain-derived neurotrophic factor, glial-derived neurotrophic factor, nerve growth factor (NGF), retinoic acid, laminin and neuregulin promote activity. Neurotoxicity enhances nuclear activity, thus leading to MEF2 phosphorylation and inhibition prior to apoptosis of cortical neurons. Repression by GSTP1 via p25/p35 translocation prevents neurodegeneration. Its function is as follows. Proline-directed serine/threonine-protein kinase essential for neuronal cell cycle arrest and differentiation and may be involved in apoptotic cell death in neuronal diseases by triggering abortive cell cycle re-entry. Interacts with D1 and D3-type G1 cyclins. Phosphorylates SRC, NOS3, VIM/vimentin, p35/CDK5R1, MEF2A, SIPA1L1, SH3GLB1, PXN, PAK1, MCAM/MUC18, SEPT5, SYN1, DNM1, AMPH, SYNJ1, CDK16, RAC1, RHOA, CDC42, TONEBP/NFAT5, MAPT/TAU, MAP1B, histone H1, p53/TP53, HDAC1, APEX1, PTK2/FAK1, huntingtin/HTT, ATM, MAP2, NEFH and NEFM. Regulates several neuronal development and physiological processes including neuronal survival, migration and differentiation, axonal and neurite growth, synaptogenesis, oligodendrocyte differentiation, synaptic plasticity and neurotransmission, by phosphorylating key proteins. Negatively regulates the CACNA1B/CAV2.2 -mediated Ca(2+) release probability at hippocampal neuronal soma and synaptic terminals. Activated by interaction with CDK5R1 (p35) and CDK5R2 (p39), especially in postmitotic neurons, and promotes CDK5R1 (p35) expression in an autostimulation loop. Phosphorylates many downstream substrates such as Rho and Ras family small GTPases (e.g. PAK1, RAC1, RHOA, CDC42) or microtubule-binding proteins (e.g. MAPT/TAU, MAP2, MAP1B), and modulates actin dynamics to regulate neurite growth and/or spine morphogenesis. Also phosphorylates exocytosis associated proteins such as MCAM/MUC18, SEPT5, SYN1, and CDK16/PCTAIRE1 as well as endocytosis associated proteins such as DNM1, AMPH and SYNJ1 at synaptic terminals. In the mature central nervous system (CNS), regulates neurotransmitter movements by phosphorylating substrates associated with neurotransmitter release and synapse plasticity; synaptic vesicle exocytosis, vesicles fusion with the presynaptic membrane, and endocytosis. Promotes cell survival by activating anti-apoptotic proteins BCL2 and STAT3, and negatively regulating of JNK3/MAPK10 activity. Phosphorylation of p53/TP53 in response to genotoxic and oxidative stresses enhances its stabilization by preventing ubiquitin ligase-mediated proteasomal degradation, and induces transactivation of p53/TP53 target genes, thus regulating apoptosis. Phosphorylation of p35/CDK5R1 enhances its stabilization by preventing calpain-mediated proteolysis producing p25/CDK5R1 and avoiding ubiquitin ligase-mediated proteasomal degradation. During aberrant cell-cycle activity and DNA damage, p25/CDK5 activity elicits cell-cycle activity and double-strand DNA breaks that precedes neuronal death by deregulating HDAC1. DNA damage triggered phosphorylation of huntingtin/HTT in nuclei of neurons protects neurons against polyglutamine expansion as well as DNA damage mediated toxicity. Phosphorylation of PXN reduces its interaction with PTK2/FAK1 in matrix-cell focal adhesions (MCFA) during oligodendrocytes (OLs) differentiation. Negative regulator of Wnt/beta-catenin signaling pathway. Activator of the GAIT (IFN-gamma-activated inhibitor of translation) pathway, which suppresses expression of a post-transcriptional regulon of proinflammatory genes in myeloid cells; phosphorylates the linker domain of glutamyl-prolyl tRNA synthetase (EPRS) in a IFN-gamma-dependent manner, the initial event in assembly of the GAIT complex. Phosphorylation of SH3GLB1 is required for autophagy induction in starved neurons. Phosphorylation of TONEBP/NFAT5 in response to osmotic stress mediates its rapid nuclear localization. MEF2 is inactivated by phosphorylation in nucleus in response to neurotoxin, thus leading to neuronal apoptosis. APEX1 AP-endodeoxyribonuclease is repressed by phosphorylation, resulting in accumulation of DNA damage and contributing to neuronal death. NOS3 phosphorylation down regulates NOS3-derived nitrite (NO) levels. SRC phosphorylation mediates its ubiquitin-dependent degradation and thus leads to cytoskeletal reorganization. May regulate endothelial cell migration and angiogenesis via the modulation of lamellipodia formation. Involved in dendritic spine morphogenesis by mediating the EFNA1-EPHA4 signaling. The complex p35/CDK5 participates in the regulation of the circadian clock by modulating the function of CLOCK protein: phosphorylates CLOCK at 'Thr-451' and 'Thr-461' and regulates the transcriptional activity of the CLOCK-BMAL1 heterodimer in association with altered stability and subcellular distribution. The chain is Cyclin-dependent kinase 5 from Homo sapiens (Human).